Reading from the N-terminus, the 274-residue chain is Diaminopimelate epimerase (274 aa).

Substrate-binding residues include asparagine 11, glutamine 44, and asparagine 64. The active-site Proton donor is the cysteine 73. Substrate is bound by residues 74–75, asparagine 157, asparagine 190, and 208–209; these read GN and ER. The active-site Proton acceptor is the cysteine 217. 218-219 contacts substrate; that stretch reads GS.

This sequence belongs to the diaminopimelate epimerase family. Homodimer.

The protein localises to the cytoplasm. It carries out the reaction (2S,6S)-2,6-diaminopimelate = meso-2,6-diaminopimelate. Its pathway is amino-acid biosynthesis; L-lysine biosynthesis via DAP pathway; DL-2,6-diaminopimelate from LL-2,6-diaminopimelate: step 1/1. Its function is as follows. Catalyzes the stereoinversion of LL-2,6-diaminopimelate (L,L-DAP) to meso-diaminopimelate (meso-DAP), a precursor of L-lysine and an essential component of the bacterial peptidoglycan. The sequence is that of Diaminopimelate epimerase from Escherichia coli O127:H6 (strain E2348/69 / EPEC).